The sequence spans 102 residues: Pole-localizer protein TmaR (102 aa).

Positions 7 to 34 (IINQARRKNKLKRELQDNQKKIRDNQKR) form a coiled coil.

The protein belongs to the pole-localizer TmaR family.

It is found in the cytoplasm. Pole-localizer protein involved in the regulation of several cellular processes. The chain is Pole-localizer protein TmaR from Aliivibrio fischeri (strain ATCC 700601 / ES114) (Vibrio fischeri).